The sequence spans 166 residues: 3-isopropylmalate dehydratase small subunit (166 aa).

This sequence belongs to the LeuD family. LeuD type 2 subfamily. As to quaternary structure, heterodimer of LeuC and LeuD.

It carries out the reaction (2R,3S)-3-isopropylmalate = (2S)-2-isopropylmalate. It functions in the pathway amino-acid biosynthesis; L-leucine biosynthesis; L-leucine from 3-methyl-2-oxobutanoate: step 2/4. Functionally, catalyzes the isomerization between 2-isopropylmalate and 3-isopropylmalate, via the formation of 2-isopropylmaleate. The polypeptide is 3-isopropylmalate dehydratase small subunit (Aliarcobacter butzleri (strain RM4018) (Arcobacter butzleri)).